The sequence spans 217 residues: Adenylate kinase (217 aa).

Position 11–16 (11–16 (GSGKGT)) interacts with ATP. Residues 31 to 61 (STGTMLRQALTRSTHKSYELHKNIMHTGDLV) form an NMP region. AMP contacts are provided by residues threonine 32, arginine 37, 59–61 (DLV), 87–90 (GFPR), and glutamine 94. Residues 124-161 (GRRIHVGSGRTYHIKFNPPRNYGLDDITGEILTTRKDD) form an LID region. ATP-binding positions include arginine 125 and 134-135 (TY). Residues arginine 158 and arginine 169 each contribute to the AMP site. Arginine 202 contributes to the ATP binding site.

Belongs to the adenylate kinase family. In terms of assembly, monomer.

It is found in the cytoplasm. It carries out the reaction AMP + ATP = 2 ADP. The protein operates within purine metabolism; AMP biosynthesis via salvage pathway; AMP from ADP: step 1/1. Catalyzes the reversible transfer of the terminal phosphate group between ATP and AMP. Plays an important role in cellular energy homeostasis and in adenine nucleotide metabolism. This Blochmanniella pennsylvanica (strain BPEN) protein is Adenylate kinase.